Here is a 510-residue protein sequence, read N- to C-terminus: Light-independent protochlorophyllide reductase subunit B (510 aa).

Asp-36 lines the [4Fe-4S] cluster pocket. Catalysis depends on Asp-296, which acts as the Proton donor. 431–432 (GM) contributes to the substrate binding site.

It belongs to the ChlB/BchB/BchZ family. As to quaternary structure, protochlorophyllide reductase is composed of three subunits; ChlL, ChlN and ChlB. Forms a heterotetramer of two ChlB and two ChlN subunits. It depends on [4Fe-4S] cluster as a cofactor.

It is found in the plastid. Its subcellular location is the chloroplast. The enzyme catalyses chlorophyllide a + oxidized 2[4Fe-4S]-[ferredoxin] + 2 ADP + 2 phosphate = protochlorophyllide a + reduced 2[4Fe-4S]-[ferredoxin] + 2 ATP + 2 H2O. It functions in the pathway porphyrin-containing compound metabolism; chlorophyll biosynthesis (light-independent). In terms of biological role, component of the dark-operative protochlorophyllide reductase (DPOR) that uses Mg-ATP and reduced ferredoxin to reduce ring D of protochlorophyllide (Pchlide) to form chlorophyllide a (Chlide). This reaction is light-independent. The NB-protein (ChlN-ChlB) is the catalytic component of the complex. In Stigeoclonium helveticum (Green alga), this protein is Light-independent protochlorophyllide reductase subunit B.